A 350-amino-acid chain; its full sequence is Twinfilin-1 (350 aa).

Position 2 is an N-acetylserine (Ser2). The ADF-H 1 domain occupies 2–139 (SHQTGIQASE…SLHGYKKYLL (138 aa)). A phosphoserine mark is found at Ser143 and Ser277. An ADF-H 2 domain is found at 177–313 (GVAFPISQEA…TADFLYEEVH (137 aa)). Phosphotyrosine is present on Tyr309. A disordered region spans residues 316–350 (QHAHKQSFAKPKGPSGKRGIRRIIRGPAETEATTE). Thr349 bears the Phosphothreonine mark.

The protein belongs to the actin-binding proteins ADF family. Twinfilin subfamily. Interacts with G-actin; ADP-actin form and capping protein (CP). May also be able to interact with TWF2 and phosphoinositides, PI(4,5)P2. When bound to PI(4,5)P2, it is down-regulated. Interacts with ACTG1. Phosphorylated on serine and threonine residues.

It is found in the cytoplasm. The protein resides in the cytoskeleton. Its function is as follows. Actin-binding protein involved in motile and morphological processes. Inhibits actin polymerization, likely by sequestering G-actin. By capping the barbed ends of filaments, it also regulates motility. Seems to play an important role in clathrin-mediated endocytosis and distribution of endocytic organelles. This Bos taurus (Bovine) protein is Twinfilin-1 (TWF1).